The primary structure comprises 227 residues: Cytidylate kinase (227 aa).

12–20 lines the ATP pocket; sequence GPSGAGKGT.

It belongs to the cytidylate kinase family. Type 1 subfamily.

Its subcellular location is the cytoplasm. It carries out the reaction CMP + ATP = CDP + ADP. The enzyme catalyses dCMP + ATP = dCDP + ADP. This Salmonella paratyphi B (strain ATCC BAA-1250 / SPB7) protein is Cytidylate kinase.